The sequence spans 222 residues: Latexin (222 aa).

The region spanning 1–97 (MEIPPTNYPA…NFTFEGETGK (97 aa)) is the Cystatin LXN-type 1 domain. N6-acetyllysine is present on Lys55. Positions 98–117 (NPDEEDNTFYQRLKSMKEPL) are alpha-helical linker. The Cystatin LXN-type 2 domain occupies 118 to 222 (EAQNIPDNFG…SRLPKEVQLE (105 aa)).

Belongs to the protease inhibitor I47 (latexin) family. Highly expressed in heart, prostate, ovary, kidney, pancreas, and colon, moderate or low in other tissues including brain.

It localises to the cytoplasm. Functionally, hardly reversible, non-competitive, and potent inhibitor of CPA1, CPA2 and CPA4. May play a role in inflammation. This Homo sapiens (Human) protein is Latexin (LXN).